The following is a 372-amino-acid chain: DNA-directed RNA polymerase subunit alpha (372 aa).

An alpha N-terminal domain (alpha-NTD) region spans residues 1–268 (MIFDEDSNSI…DQFQPFINFD (268 aa)). The interval 280 to 372 (KDTLPYDSNL…ESLSKQYSEE (93 aa)) is alpha C-terminal domain (alpha-CTD).

Belongs to the RNA polymerase alpha chain family. Homodimer. The RNAP catalytic core consists of 2 alpha, 1 beta, 1 beta' and 1 omega subunit. When a sigma factor is associated with the core the holoenzyme is formed, which can initiate transcription.

It carries out the reaction RNA(n) + a ribonucleoside 5'-triphosphate = RNA(n+1) + diphosphate. In terms of biological role, DNA-dependent RNA polymerase catalyzes the transcription of DNA into RNA using the four ribonucleoside triphosphates as substrates. This is DNA-directed RNA polymerase subunit alpha from Ehrlichia chaffeensis (strain ATCC CRL-10679 / Arkansas).